A 353-amino-acid polypeptide reads, in one-letter code: UPF0283 membrane protein CKO_01392 (353 aa).

A run of 3 helical transmembrane segments spans residues 70 to 90 (MVMG…VQWT), 99 to 119 (WVAL…VGSV), and 213 to 233 (ESTL…FIAW).

Belongs to the UPF0283 family.

It is found in the cell inner membrane. The protein is UPF0283 membrane protein CKO_01392 of Citrobacter koseri (strain ATCC BAA-895 / CDC 4225-83 / SGSC4696).